The following is a 247-amino-acid chain: Putative trypsin-6 (247 aa).

The N-terminal stretch at Met-1–Ala-15 is a signal peptide. A Peptidase S1 domain is found at Ile-24–Ala-244. The cysteines at positions 48 and 64 are disulfide-linked. His-63 serves as the catalytic Charge relay system. Residues Glu-75, Asn-77, Val-80, and Glu-85 each contribute to the Ca(2+) site. The active-site Charge relay system is the Asp-107. Disulfide bonds link Cys-139–Cys-206, Cys-171–Cys-185, and Cys-196–Cys-220. The active-site Charge relay system is the Ser-200.

The protein belongs to the peptidase S1 family. Tryptase subfamily. As to expression, overexpressed in metastasing in non small cell lung tumors, leading to an enhanced cell migration.

It localises to the secreted. The enzyme catalyses Preferential cleavage: Arg-|-Xaa, Lys-|-Xaa.. Its function is as follows. May regulate cell migration. This Homo sapiens (Human) protein is Putative trypsin-6 (PRSS3P2).